Here is a 226-residue protein sequence, read N- to C-terminus: Thymidylate kinase (226 aa).

Position 20-27 (Gly20–Ser27) interacts with ATP.

This sequence belongs to the thymidylate kinase family.

The enzyme catalyses dTMP + ATP = dTDP + ADP. In terms of biological role, phosphorylation of dTMP to form dTDP in both de novo and salvage pathways of dTTP synthesis. The protein is Thymidylate kinase of Bradyrhizobium sp. (strain BTAi1 / ATCC BAA-1182).